The chain runs to 297 residues: 4-hydroxy-tetrahydrodipicolinate synthase (297 aa).

Threonine 50 lines the pyruvate pocket. Tyrosine 138 serves as the catalytic Proton donor/acceptor. The active-site Schiff-base intermediate with substrate is the lysine 166. Isoleucine 208 is a binding site for pyruvate.

Belongs to the DapA family. In terms of assembly, homotetramer; dimer of dimers.

It localises to the cytoplasm. The catalysed reaction is L-aspartate 4-semialdehyde + pyruvate = (2S,4S)-4-hydroxy-2,3,4,5-tetrahydrodipicolinate + H2O + H(+). It participates in amino-acid biosynthesis; L-lysine biosynthesis via DAP pathway; (S)-tetrahydrodipicolinate from L-aspartate: step 3/4. Its function is as follows. Catalyzes the condensation of (S)-aspartate-beta-semialdehyde [(S)-ASA] and pyruvate to 4-hydroxy-tetrahydrodipicolinate (HTPA). The protein is 4-hydroxy-tetrahydrodipicolinate synthase of Gluconobacter oxydans (strain 621H) (Gluconobacter suboxydans).